Reading from the N-terminus, the 67-residue chain is Tachystatin-A2 (67 aa).

The N-terminal stretch at 1-23 (MKLQNTLILIGCLFLMGAMIGDA) is a signal peptide. Disulfide bonds link cysteine 27–cysteine 47, cysteine 34–cysteine 52, and cysteine 46–cysteine 64.

In terms of tissue distribution, granular hemocytes, small secretory granules.

It localises to the secreted. Functionally, exhibits stronger antimicrobial activity against the Gram-positive bacteria (S.aureus (IC(50)=4.2 ug/ml)) and fungi (C.albicans (IC(50)=3.0 ug/ml) and P.pastoris (IC(50)=0.5 ug/ml)) than Gram-negative bacteria (E.coli (IC(50)=25 ug/ml)). Binds to chitin (8.4 uM are required to obtain 50% of binding). Does not cause hemolysis on sheep erythrocytes. Has no blocking activity on the P-type calcium channel. Has also been shown to weakly inhibit Kv1.2/KCNA2 voltage-gated potassium channels and TRPV1 receptors. The protein is Tachystatin-A2 of Tachypleus tridentatus (Japanese horseshoe crab).